Consider the following 226-residue polypeptide: PDGF-related-transforming protein sis (226 aa).

Residues 201–215 are compositionally biased toward basic residues; sequence RRPPKGKHRKCKHTH. The tract at residues 201–226 is disordered; that stretch reads RRPPKGKHRKCKHTHDKTALKETLGA.

This sequence belongs to the PDGF/VEGF growth factor family.

The sequence is that of PDGF-related-transforming protein sis (V-SIS) from Woolly monkey sarcoma virus (WMSV).